Reading from the N-terminus, the 144-residue chain is Large ribosomal subunit protein uL15 (144 aa).

A disordered region spans residues 1–57 (MLLNTLSPAAGSKHAPKRLGRGVGSGLGKTGGRGHKGQKSRSGGKVRPGFEGGQMPL). Gly residues predominate over residues 21-31 (RGVGSGLGKTG). Basic residues predominate over residues 32-44 (GRGHKGQKSRSGG).

The protein belongs to the universal ribosomal protein uL15 family. In terms of assembly, part of the 50S ribosomal subunit.

In terms of biological role, binds to the 23S rRNA. The protein is Large ribosomal subunit protein uL15 of Vibrio cholerae serotype O1 (strain ATCC 39541 / Classical Ogawa 395 / O395).